The following is a 364-amino-acid chain: Eukaryotic translation initiation factor 3 subunit H (364 aa).

The 150-residue stretch at Val-13 to Phe-162 folds into the MPN domain.

The protein belongs to the eIF-3 subunit H family. Component of the eukaryotic translation initiation factor 3 (eIF-3) complex.

The protein localises to the cytoplasm. Functionally, component of the eukaryotic translation initiation factor 3 (eIF-3) complex, which is involved in protein synthesis of a specialized repertoire of mRNAs and, together with other initiation factors, stimulates binding of mRNA and methionyl-tRNAi to the 40S ribosome. The eIF-3 complex specifically targets and initiates translation of a subset of mRNAs involved in cell proliferation. This chain is Eukaryotic translation initiation factor 3 subunit H, found in Phaeosphaeria nodorum (strain SN15 / ATCC MYA-4574 / FGSC 10173) (Glume blotch fungus).